Here is a 373-residue protein sequence, read N- to C-terminus: tRNA-specific 2-thiouridylase MnmA (373 aa).

ATP-binding positions include 12–19 (GMSGGVDS) and Met-38. The segment at 98–100 (NPD) is interaction with target base in tRNA. The active-site Nucleophile is Cys-103. An intrachain disulfide couples Cys-103 to Cys-200. Gly-127 provides a ligand contact to ATP. Residues 150-152 (KDQ) are interaction with tRNA. Catalysis depends on Cys-200, which acts as the Cysteine persulfide intermediate. Residues 312–313 (RY) form an interaction with tRNA region.

It belongs to the MnmA/TRMU family.

It is found in the cytoplasm. It carries out the reaction S-sulfanyl-L-cysteinyl-[protein] + uridine(34) in tRNA + AH2 + ATP = 2-thiouridine(34) in tRNA + L-cysteinyl-[protein] + A + AMP + diphosphate + H(+). Catalyzes the 2-thiolation of uridine at the wobble position (U34) of tRNA, leading to the formation of s(2)U34. In Streptococcus sanguinis (strain SK36), this protein is tRNA-specific 2-thiouridylase MnmA.